The following is a 329-amino-acid chain: DNA-directed RNA polymerase subunit alpha (329 aa).

The alpha N-terminal domain (alpha-NTD) stretch occupies residues M1–R235. Residues F249 to E329 form an alpha C-terminal domain (alpha-CTD) region.

Belongs to the RNA polymerase alpha chain family. Homodimer. The RNAP catalytic core consists of 2 alpha, 1 beta, 1 beta' and 1 omega subunit. When a sigma factor is associated with the core the holoenzyme is formed, which can initiate transcription.

It catalyses the reaction RNA(n) + a ribonucleoside 5'-triphosphate = RNA(n+1) + diphosphate. Functionally, DNA-dependent RNA polymerase catalyzes the transcription of DNA into RNA using the four ribonucleoside triphosphates as substrates. This Shigella dysenteriae serotype 1 (strain Sd197) protein is DNA-directed RNA polymerase subunit alpha.